The sequence spans 162 residues: Xanthine-guanine phosphoribosyltransferase (162 aa).

Residues 41 to 42 (RG) and 92 to 100 (DDLVDTGNT) each bind 5-phospho-alpha-D-ribose 1-diphosphate. Asp-93 is a binding site for Mg(2+). Residues Asp-96 and Ile-139 each coordinate guanine. Residues Asp-96 and Ile-139 each coordinate xanthine. GMP contacts are provided by residues 96-100 (DTGNT) and 138-139 (WI).

Belongs to the purine/pyrimidine phosphoribosyltransferase family. XGPT subfamily. As to quaternary structure, homotetramer. Mg(2+) is required as a cofactor.

Its subcellular location is the cell inner membrane. It carries out the reaction GMP + diphosphate = guanine + 5-phospho-alpha-D-ribose 1-diphosphate. The enzyme catalyses XMP + diphosphate = xanthine + 5-phospho-alpha-D-ribose 1-diphosphate. The catalysed reaction is IMP + diphosphate = hypoxanthine + 5-phospho-alpha-D-ribose 1-diphosphate. The protein operates within purine metabolism; GMP biosynthesis via salvage pathway; GMP from guanine: step 1/1. It functions in the pathway purine metabolism; XMP biosynthesis via salvage pathway; XMP from xanthine: step 1/1. Its function is as follows. Purine salvage pathway enzyme that catalyzes the transfer of the ribosyl-5-phosphate group from 5-phospho-alpha-D-ribose 1-diphosphate (PRPP) to the N9 position of the 6-oxopurines guanine and xanthine to form the corresponding ribonucleotides GMP (guanosine 5'-monophosphate) and XMP (xanthosine 5'-monophosphate), with the release of PPi. To a lesser extent, also acts on hypoxanthine. In Chromohalobacter salexigens (strain ATCC BAA-138 / DSM 3043 / CIP 106854 / NCIMB 13768 / 1H11), this protein is Xanthine-guanine phosphoribosyltransferase.